The primary structure comprises 203 residues: Enterotoxin-like toxin X (203 aa).

Belongs to the staphylococcal/streptococcal toxin family.

It is found in the secreted. Its function is as follows. Plays a role in the inhibition of the host innate immune system. Inhibits phagocytosis and killing by human neutrophils by interacting with multiple neutrophil surface glycoproteins in a sialic acid-dependent manner. The protein is Enterotoxin-like toxin X of Staphylococcus aureus (strain NCTC 8325 / PS 47).